The following is a 164-amino-acid chain: Peptide deformylase-like (164 aa).

E133 is an active-site residue.

The protein belongs to the polypeptide deformylase family.

The polypeptide is Peptide deformylase-like (Agrobacterium fabrum (strain C58 / ATCC 33970) (Agrobacterium tumefaciens (strain C58))).